The chain runs to 488 residues: GTPase Der (488 aa).

EngA-type G domains are found at residues Pro3–Met166 and Ile199–Thr372. GTP contacts are provided by residues Gly9 to Ser16, Asp56 to Ile60, Asn118 to Asp121, Gly205 to Ser212, Asp252 to Val256, and Asn317 to Asp320. One can recognise a KH-like domain in the interval Arg373–Asp457. The tract at residues Phe460 to Lys488 is disordered. A compositionally biased stretch (basic residues) spans Arg473 to Lys488.

This sequence belongs to the TRAFAC class TrmE-Era-EngA-EngB-Septin-like GTPase superfamily. EngA (Der) GTPase family. Associates with the 50S ribosomal subunit.

GTPase that plays an essential role in the late steps of ribosome biogenesis. In Shewanella baltica (strain OS155 / ATCC BAA-1091), this protein is GTPase Der.